A 229-amino-acid polypeptide reads, in one-letter code: Large ribosomal subunit protein uL1c (229 aa).

It belongs to the universal ribosomal protein uL1 family. As to quaternary structure, part of the 50S ribosomal subunit.

It is found in the plastid. Its subcellular location is the chloroplast. Its function is as follows. Binds directly to 23S rRNA. Might be involved in E site tRNA release (Potential). This chain is Large ribosomal subunit protein uL1c (rpl1), found in Porphyra purpurea (Red seaweed).